Consider the following 138-residue polypeptide: Small ribosomal subunit protein uS11c (138 aa).

The protein belongs to the universal ribosomal protein uS11 family. In terms of assembly, part of the 30S ribosomal subunit.

The protein resides in the plastid. The protein localises to the chloroplast. In Nandina domestica (Heavenly bamboo), this protein is Small ribosomal subunit protein uS11c.